A 245-amino-acid polypeptide reads, in one-letter code: Putative outer membrane protein RBE_0022 (245 aa).

An N-terminal signal peptide occupies residues 1–23 (MIRMSKRLGVILFVSCISINSFA).

Belongs to the OmpW/AlkL family.

The protein localises to the cell outer membrane. This is Putative outer membrane protein RBE_0022 from Rickettsia bellii (strain RML369-C).